A 176-amino-acid chain; its full sequence is Immunity factor for TNT homolog (176 aa).

Interacts with the tuberculosis necrotizing toxin (TNT) homolog, the C-terminal domain of the outer membrane channel protein CpnT.

Its function is as follows. Antitoxin for tuberculosis necrotizing toxin (TNT) homolog. Acts by binding directly to TNT, which inhibits NAD(+) glycohydrolase activity of TNT and protects M.bovis from self-poisoning. The polypeptide is Immunity factor for TNT homolog (Mycobacterium bovis (strain BCG / Pasteur 1173P2)).